We begin with the raw amino-acid sequence, 449 residues long: Nuclear hormone receptor family member nhr-43 (449 aa).

The nuclear receptor DNA-binding region spans Asn-44–Gly-122. 2 consecutive NR C4-type zinc fingers follow at residues Cys-47 to Cys-68 and Cys-84 to Cys-105. Residues Ser-125 to Asp-142 show a composition bias toward basic and acidic residues. A disordered region spans residues Ser-125–Cys-154. The 250-residue stretch at Asn-200–Ile-449 folds into the NR LBD domain.

The protein localises to the nucleus. Ligand-activated transcription factor. Positively modulates expression of homeobox protein lin-39, perhaps by binding to the sequence motif 5'-TGAC-3' in regulatory regions of the lin-39 gene, acting in the embryo, and also in the vulval lineage. The protein is Nuclear hormone receptor family member nhr-43 of Caenorhabditis elegans.